Consider the following 271-residue polypeptide: TIP41-like protein (271 aa).

N6-acetyllysine is present on Lys106. The interaction with PPP2CA stretch occupies residues Arg173 to Glu271. Ser265 and Ser270 each carry phosphoserine.

This sequence belongs to the TIP41 family. As to quaternary structure, interacts with PPP2CA. Interacts with PPP2CB, PPP4C and PPP6C. Interacts with IGBP1; the interaction is dependent on PPP2CA. Associates with a protein phosphatase 2A PP2A(C):IGBP1 complex. Interacts with PPP4C and PPP4R2.

The protein resides in the cytoplasm. In terms of biological role, may be a allosteric regulator of serine/threonine-protein phosphatase 2A (PP2A). Inhibits catalytic activity of the PP2A(D) core complex in vitro. The PP2A(C):TIPRL complex does not show phosphatase activity. Acts as a negative regulator of serine/threonine-protein phosphatase 4 probably by inhibiting the formation of the active PPP4C:PPP4R2 complex; the function is proposed to implicate it in DNA damage response by promoting H2AX phosphorylated on Ser-140 (gamma-H2AX). May play a role in the regulation of ATM/ATR signaling pathway controlling DNA replication and repair. The sequence is that of TIP41-like protein (Tiprl) from Rattus norvegicus (Rat).